We begin with the raw amino-acid sequence, 285 residues long: Glutamate racemase (285 aa).

Substrate is bound by residues 30 to 31 and 62 to 63; these read DS and YG. The active-site Proton donor/acceptor is cysteine 94. Substrate is bound at residue 95–96; the sequence is NT. Residue cysteine 206 is the Proton donor/acceptor of the active site. A substrate-binding site is contributed by 207-208; the sequence is TH.

This sequence belongs to the aspartate/glutamate racemases family.

The enzyme catalyses L-glutamate = D-glutamate. The protein operates within cell wall biogenesis; peptidoglycan biosynthesis. Provides the (R)-glutamate required for cell wall biosynthesis. The polypeptide is Glutamate racemase (Pectobacterium carotovorum subsp. carotovorum (strain PC1)).